Consider the following 539-residue polypeptide: Glucose-6-phosphate isomerase (539 aa).

Glu-353 functions as the Proton donor in the catalytic mechanism. Active-site residues include His-384 and Lys-505.

This sequence belongs to the GPI family.

Its subcellular location is the cytoplasm. It carries out the reaction alpha-D-glucose 6-phosphate = beta-D-fructose 6-phosphate. Its pathway is carbohydrate biosynthesis; gluconeogenesis. It participates in carbohydrate degradation; glycolysis; D-glyceraldehyde 3-phosphate and glycerone phosphate from D-glucose: step 2/4. In terms of biological role, catalyzes the reversible isomerization of glucose-6-phosphate to fructose-6-phosphate. This is Glucose-6-phosphate isomerase from Ralstonia pickettii (strain 12J).